A 422-amino-acid chain; its full sequence is Interleukin-11 receptor subunit alpha (422 aa).

The first 22 residues, 1–22 (MSSSCSGLSRVLVAVATALVSA), serve as a signal peptide directing secretion. Over 24–370 (SPCPQAWGPP…DSVEQVAVLA (347 aa)) the chain is Extracellular. An Ig-like C2-type domain is found at 27–110 (PQAWGPPGVQ…LGGTVTLQLG (84 aa)). Disulfide bonds link Cys48-Cys94, Cys120-Cys130, and Cys170-Cys180. Fibronectin type-III domains are found at residues 112 to 219 (PPAR…LRPD) and 220 to 317 (PPQG…TPST). A glycan (N-linked (GlcNAc...) asparagine) is linked at Asn127. N-linked (GlcNAc...) asparagine glycosylation is present at Asn194. The WSXWS motif signature appears at 304 to 308 (WSTWS). The segment at 335–355 (EVEPQVDSPAPPRPSLQPHPR) is disordered. A helical transmembrane segment spans residues 371 to 391 (SLGILSFLGLVAGALALGLWL). Residues 392-422 (RLRRGGKDGSPKPGFLASVIPVDRRPGAPNL) are Cytoplasmic-facing. Positions 398–422 (KDGSPKPGFLASVIPVDRRPGAPNL) are disordered. The segment covering 413 to 422 (VDRRPGAPNL) has biased composition (basic and acidic residues).

It belongs to the type I cytokine receptor family. Type 3 subfamily. As to quaternary structure, on IL11 binding, forms a multimer complex with IL6ST/gp130. Post-translationally, a short soluble form is also released from the membrane by proteolysis. The sIL11RA is formed either by limited proteolysis of membrane-bound receptors, a process referred to as ectodomain shedding, or directly secreted from the cells after alternative mRNA splicing. mIL11RA is cleaved by the proteases ADAM10, ELANE and PRTN3. In terms of tissue distribution, expressed in a number of cell lines, including the myelogenous leukemia cell line K-562, the megakaryocytic leukemia cell line M-07e, the erythroleukemia cell line TF-1, and the osteosarcoma cell lines, MG-63 and SaOS-2. Also expressed in normal and malignant prostate epithelial cell lines. Expression levels are increased in prostate carcinoma.

The protein localises to the membrane. Its subcellular location is the secreted. Its function is as follows. Receptor for interleukin-11 (IL11). The receptor systems for IL6, LIF, OSM, CNTF, IL11 and CT1 can utilize IL6ST for initiating signal transmission. The IL11/IL11RA/IL6ST complex may be involved in the control of proliferation and/or differentiation of skeletogenic progenitor or other mesenchymal cells. Essential for the normal development of craniofacial bones and teeth. Restricts suture fusion and tooth number. Functionally, soluble form of IL11 receptor (sIL11RA) that acts as an agonist of IL11 activity. The IL11:sIL11RA complex binds to IL6ST/gp130 on cell surfaces and induces signaling also on cells that do not express membrane-bound IL11RA in a process called IL11 trans-signaling. This chain is Interleukin-11 receptor subunit alpha, found in Homo sapiens (Human).